We begin with the raw amino-acid sequence, 115 residues long: Hydrogenase maturation factor HypA (115 aa).

H2 provides a ligand contact to Ni(2+). 4 residues coordinate Zn(2+): C73, C76, C89, and C92.

Belongs to the HypA/HybF family.

In terms of biological role, involved in the maturation of [NiFe] hydrogenases. Required for nickel insertion into the metal center of the hydrogenase. The protein is Hydrogenase maturation factor HypA of Parabacteroides distasonis (strain ATCC 8503 / DSM 20701 / CIP 104284 / JCM 5825 / NCTC 11152).